The chain runs to 154 residues: Peptide methionine sulfoxide reductase MsrB (154 aa).

The MsrB domain occupies 28–150 (DQQWREQLSE…NSVSLIFNKI (123 aa)). Cys67, Cys70, Cys116, and Cys119 together coordinate Zn(2+). Cys139 (nucleophile) is an active-site residue.

This sequence belongs to the MsrB Met sulfoxide reductase family. The cofactor is Zn(2+).

It catalyses the reaction L-methionyl-[protein] + [thioredoxin]-disulfide + H2O = L-methionyl-(R)-S-oxide-[protein] + [thioredoxin]-dithiol. In Vibrio vulnificus (strain CMCP6), this protein is Peptide methionine sulfoxide reductase MsrB.